Here is a 636-residue protein sequence, read N- to C-terminus: Threonine--tRNA ligase (636 aa).

One can recognise a TGS domain in the interval 1–61 (MINITLPDGK…ETDASVVFIT (61 aa)). Positions 238–528 (DHRKLGTALD…LIEHYAGKFP (291 aa)) are catalytic. Zn(2+) is bound by residues C329, H380, and H505.

The protein belongs to the class-II aminoacyl-tRNA synthetase family. Homodimer. The cofactor is Zn(2+).

The protein resides in the cytoplasm. The catalysed reaction is tRNA(Thr) + L-threonine + ATP = L-threonyl-tRNA(Thr) + AMP + diphosphate + H(+). Its function is as follows. Catalyzes the attachment of threonine to tRNA(Thr) in a two-step reaction: L-threonine is first activated by ATP to form Thr-AMP and then transferred to the acceptor end of tRNA(Thr). Also edits incorrectly charged L-seryl-tRNA(Thr). The polypeptide is Threonine--tRNA ligase (Desulfatibacillum aliphaticivorans).